A 762-amino-acid polypeptide reads, in one-letter code: Alpha-xylosidase XylQ (762 aa).

The active-site Nucleophile is D414. Residue E417 is part of the active site.

This sequence belongs to the glycosyl hydrolase 31 family.

The protein resides in the cell membrane. It carries out the reaction Hydrolysis of terminal, non-reducing alpha-D-xylose residues with release of alpha-D-xylose.. Involved in the metabolism of isoprimeverose. Hydrolyzes isoprimeverose into equimolar amounts of glucose and xylose. In vitro, can also use p-nitrophenyl-alpha-D-xylopyranoside (alpha-p-NPX). The polypeptide is Alpha-xylosidase XylQ (Lactiplantibacillus pentosus (Lactobacillus pentosus)).